A 439-amino-acid chain; its full sequence is tRNA(Ile)-lysidine synthase (439 aa).

Residue 25–30 coordinates ATP; that stretch reads SGGLDS.

Belongs to the tRNA(Ile)-lysidine synthase family.

Its subcellular location is the cytoplasm. The enzyme catalyses cytidine(34) in tRNA(Ile2) + L-lysine + ATP = lysidine(34) in tRNA(Ile2) + AMP + diphosphate + H(+). Functionally, ligates lysine onto the cytidine present at position 34 of the AUA codon-specific tRNA(Ile) that contains the anticodon CAU, in an ATP-dependent manner. Cytidine is converted to lysidine, thus changing the amino acid specificity of the tRNA from methionine to isoleucine. In Edwardsiella ictaluri (strain 93-146), this protein is tRNA(Ile)-lysidine synthase.